The sequence spans 738 residues: NAD(P)H-quinone oxidoreductase subunit 5, chloroplastic (738 aa).

16 helical membrane-spanning segments follow: residues 9-29, 40-60, 89-109, 125-145, 147-167, 185-205, 230-250, 258-278, 280-300, 327-347, 354-374, 396-416, 425-445, 546-566, 603-623, and 718-738; these read WIIP…LLLF, WAFP…NLSI, IDPL…MVLI, FASM…SNLI, IYIF…FWFT, GDFG…SFEF, AALL…HVWL, TPIS…FLVA, LLPL…IGII, LGYM…FHLI, ALLF…VGYS, ISFL…CFWS, WLYS…TAFY, LFPL…GIPF, FSVS…KPIY, and YLFF…FPVF.

Belongs to the complex I subunit 5 family. As to quaternary structure, NDH is composed of at least 16 different subunits, 5 of which are encoded in the nucleus.

Its subcellular location is the plastid. The protein localises to the chloroplast thylakoid membrane. It carries out the reaction a plastoquinone + NADH + (n+1) H(+)(in) = a plastoquinol + NAD(+) + n H(+)(out). It catalyses the reaction a plastoquinone + NADPH + (n+1) H(+)(in) = a plastoquinol + NADP(+) + n H(+)(out). Functionally, NDH shuttles electrons from NAD(P)H:plastoquinone, via FMN and iron-sulfur (Fe-S) centers, to quinones in the photosynthetic chain and possibly in a chloroplast respiratory chain. The immediate electron acceptor for the enzyme in this species is believed to be plastoquinone. Couples the redox reaction to proton translocation, and thus conserves the redox energy in a proton gradient. This is NAD(P)H-quinone oxidoreductase subunit 5, chloroplastic (ndhF) from Ligustrum vulgare (Common privet).